A 340-amino-acid polypeptide reads, in one-letter code: Glycerol-3-phosphate dehydrogenase [NAD(P)+] (340 aa).

NADPH-binding residues include S14, F15, R35, and K108. Residues K108 and G136 each coordinate sn-glycerol 3-phosphate. Residue A140 participates in NADPH binding. Sn-glycerol 3-phosphate contacts are provided by K191, D244, S254, R255, and N256. Catalysis depends on K191, which acts as the Proton acceptor. An NADPH-binding site is contributed by R255. E281 is an NADPH binding site.

This sequence belongs to the NAD-dependent glycerol-3-phosphate dehydrogenase family.

Its subcellular location is the cytoplasm. It carries out the reaction sn-glycerol 3-phosphate + NAD(+) = dihydroxyacetone phosphate + NADH + H(+). It catalyses the reaction sn-glycerol 3-phosphate + NADP(+) = dihydroxyacetone phosphate + NADPH + H(+). It functions in the pathway membrane lipid metabolism; glycerophospholipid metabolism. Its function is as follows. Catalyzes the reduction of the glycolytic intermediate dihydroxyacetone phosphate (DHAP) to sn-glycerol 3-phosphate (G3P), the key precursor for phospholipid synthesis. The sequence is that of Glycerol-3-phosphate dehydrogenase [NAD(P)+] from Pseudomonas paraeruginosa (strain DSM 24068 / PA7) (Pseudomonas aeruginosa (strain PA7)).